We begin with the raw amino-acid sequence, 427 residues long: Mitogen-activated protein kinase 8 (427 aa).

Positions 26–321 (YQNLKPIGSG…VDEALQHPYI (296 aa)) constitute a Protein kinase domain. ATP is bound by residues 32 to 40 (IGSGAQGIV) and Lys55. The residue at position 116 (Cys116) is an S-nitrosocysteine. The Proton acceptor role is filled by Asp151. Position 183 is a phosphothreonine; by MAP2K7 (Thr183). The short motif at 183–185 (TPY) is the TXY element. Residue Tyr185 is modified to Phosphotyrosine; by MAP2K4. Phosphoserine is present on residues Met301 and Ser377. Residues 371–427 (VIRGQPSPLGAAVINGSQHPSSSSSVNDVSSMSTDPTLASDTDSSLEAAAGPLGCCR) form a disordered region. The span at 387 to 403 (SQHPSSSSSVNDVSSMS) shows a compositional bias: low complexity. Polar residues predominate over residues 404 to 415 (TDPTLASDTDSS).

The protein belongs to the protein kinase superfamily. CMGC Ser/Thr protein kinase family. MAP kinase subfamily. As to quaternary structure, forms a complex with MAPK8IP1 and ARHGEF28. Found in a complex with SH3RF1, RAC1, MAP3K11/MLK3, MAP2K7/MKK7 and MAPK8IP1/JIP1. Found in a complex with SH3RF1, RAC2, MAP3K7/TAK1, MAP2K7/MKK7, MAPK8IP1/JIP1 and MAPK9/JNK2. Binds to at least four scaffolding proteins, MAPK8IP1/JIP-1, MAPK8IP2/JIP-2, MAPK8IP3/JIP-3/JSAP1 and SPAG9/MAPK8IP4/JIP-4. These proteins also bind other components of the JNK signaling pathway. Interacts with TP53 and WWOX. Interacts with JAMP. Interacts with HSF1 (via D domain and preferentially with hyperphosphorylated form); this interaction occurs under both normal growth conditions and immediately upon heat shock. Interacts (phosphorylated form) with NFE2; the interaction phosphorylates NFE2 in undifferentiated cells. Interacts with NFATC4. Interacts with MECOM; regulates JNK signaling. Interacts with PIN1; this interaction mediates MAPK8 conformational changes leading to the binding of MAPK8 to its substrates. Interacts with GRIPAP1. Interacts with POU5F1; phosphorylates POU5F1 at 'Ser-355'. Interacts with STMN2, STMN3 and STMN4. Interacts with HSF4. Mg(2+) is required as a cofactor. Post-translationally, dually phosphorylated on Thr-183 and Tyr-185 by MAP2K7 and MAP2K4, which activates the enzyme. Phosphorylated by TAOK2. May be phosphorylated at Thr-183 and Tyr-185 by MAP3K1/MEKK1. Phosphorylated form is more concentrated at synapses than none-phosphorylated.

Its subcellular location is the cytoplasm. The protein localises to the nucleus. The protein resides in the synapse. It catalyses the reaction L-seryl-[protein] + ATP = O-phospho-L-seryl-[protein] + ADP + H(+). The enzyme catalyses L-threonyl-[protein] + ATP = O-phospho-L-threonyl-[protein] + ADP + H(+). Activated by threonine and tyrosine phosphorylation by either of two dual specificity kinases, MAP2K4 and MAP2K7. MAP2K4 shows a strong preference for Tyr-185 while MAP2K7 phosphorylates Tyr-183 preferentially. Inhibited by dual specificity phosphatases, such as DUSP1. Inhibited by SERPINB3. In terms of biological role, serine/threonine-protein kinase involved in various processes such as cell proliferation, differentiation, migration, transformation and programmed cell death. Extracellular stimuli such as pro-inflammatory cytokines or physical stress stimulate the stress-activated protein kinase/c-Jun N-terminal kinase (SAP/JNK) signaling pathway. In this cascade, two dual specificity kinases MAP2K4/MKK4 and MAP2K7/MKK7 phosphorylate and activate MAPK8/JNK1. In turn, MAPK8/JNK1 phosphorylates a number of transcription factors, primarily components of AP-1 such as JUN, JDP2 and ATF2 and thus regulates AP-1 transcriptional activity. Phosphorylates the replication licensing factor CDT1, inhibiting the interaction between CDT1 and the histone H4 acetylase HBO1 to replication origins. Loss of this interaction abrogates the acetylation required for replication initiation. Promotes stressed cell apoptosis by phosphorylating key regulatory factors including p53/TP53 and Yes-associates protein YAP1. In T-cells, MAPK8 and MAPK9 are required for polarized differentiation of T-helper cells into Th1 cells. Contributes to the survival of erythroid cells by phosphorylating the antagonist of cell death BAD upon EPO stimulation. Mediates starvation-induced BCL2 phosphorylation, BCL2 dissociation from BECN1, and thus activation of autophagy. Phosphorylates STMN2 and hence regulates microtubule dynamics, controlling neurite elongation in cortical neurons. In the developing brain, through its cytoplasmic activity on STMN2, negatively regulates the rate of exit from multipolar stage and of radial migration from the ventricular zone. Phosphorylates several other substrates including heat shock factor protein 4 (HSF4), the deacetylase SIRT1, ELK1, or the E3 ligase ITCH. Phosphorylates the CLOCK-BMAL1 heterodimer and plays a role in the regulation of the circadian clock. Phosphorylates the heat shock transcription factor HSF1, suppressing HSF1-induced transcriptional activity. Phosphorylates POU5F1, which results in the inhibition of POU5F1's transcriptional activity and enhances its proteasomal degradation. Phosphorylates JUND and this phosphorylation is inhibited in the presence of MEN1. In neurons, phosphorylates SYT4 which captures neuronal dense core vesicles at synapses. Phosphorylates EIF4ENIF1/4-ET in response to oxidative stress, promoting P-body assembly. Phosphorylates SIRT6 in response to oxidative stress, stimulating its mono-ADP-ribosyltransferase activity. Phosphorylates NLRP3, promoting assembly of the NLRP3 inflammasome. Phosphorylates ALKBH5 in response to reactive oxygen species (ROS), promoting ALKBH5 sumoylation and inactivation. Its function is as follows. JNK1 isoforms display different binding patterns: beta-1 preferentially binds to c-Jun, whereas alpha-1, alpha-2, and beta-2 have a similar low level of binding to both c-Jun or ATF2. However, there is no correlation between binding and phosphorylation, which is achieved at about the same efficiency by all isoforms. The chain is Mitogen-activated protein kinase 8 (MAPK8) from Homo sapiens (Human).